The primary structure comprises 90 residues: Exodeoxyribonuclease 7 small subunit (90 aa).

The segment at 62–90 (QDGQANPMSSQGHTAGEYPDDEAEEAEEA) is disordered. The segment covering 64 to 74 (GQANPMSSQGH) has biased composition (polar residues). The span at 79–90 (YPDDEAEEAEEA) shows a compositional bias: acidic residues.

The protein belongs to the XseB family. Heterooligomer composed of large and small subunits.

The protein resides in the cytoplasm. It catalyses the reaction Exonucleolytic cleavage in either 5'- to 3'- or 3'- to 5'-direction to yield nucleoside 5'-phosphates.. Bidirectionally degrades single-stranded DNA into large acid-insoluble oligonucleotides, which are then degraded further into small acid-soluble oligonucleotides. This is Exodeoxyribonuclease 7 small subunit from Desulfovibrio desulfuricans (strain ATCC 27774 / DSM 6949 / MB).